The chain runs to 409 residues: Inner membrane transport protein YqeG (409 aa).

Topologically, residues 1-25 (MSNIWSKEETLWSFALYGTAVGAGT) are periplasmic. A helical membrane pass occupies residues 26–46 (LFLPIQLGSAGAVVLFITALV). Residues 47–87 (AWPLTYWPHKALCQFILSSKTSAGEGITGAVTHYYGKKIGN) are Cytoplasmic-facing. Residues 88-108 (LITTLYFIAFFVVVLIYAVAI) traverse the membrane as a helical segment. Topologically, residues 109 to 127 (TNSLTEQLAKHMVIDLRIR) are periplasmic. A helical transmembrane segment spans residues 128 to 148 (MLVSLGVVLILNLIFLMGRHA). At 149 to 151 (TIR) the chain is on the cytoplasmic side. A helical transmembrane segment spans residues 152-172 (VMGFLVFPLIAYFLFLSIYLV). The Periplasmic segment spans residues 173–193 (GSWQPDLLTTQVEFNQNTLHQ). A helical membrane pass occupies residues 194 to 214 (IWISIPVMVFAFSHTPIISTF). Over 215–235 (AIDRREKYGEHAMDKCKKIMK) the chain is Cytoplasmic. Residues 236 to 256 (VAYLIICISVLFFVFSCLLSI) traverse the membrane as a helical segment. Residues 257–276 (PPSYIEAAKEEGVTILSALS) lie on the Periplasmic side of the membrane. The helical transmembrane segment at 277 to 297 (MLPNAPAWLSISGIIVAVVAM) threads the bilayer. Residues 298-329 (SKSFLGTYFGVIEGATEVVKTTLQQVGVKKSR) are Cytoplasmic-facing. The chain crosses the membrane as a helical span at residues 330-350 (AFNRALSIMLVSLITFIVCCI). The Periplasmic portion of the chain corresponds to 351 to 353 (NPN). The helical transmembrane segment at 354 to 374 (AISMIYAISGPLIAMILFIMP) threads the bilayer. Residues 375-388 (TLSTYLIPALKPWR) lie on the Cytoplasmic side of the membrane. Residues 389-409 (SIGNLITLIVGILCVSVMFFS) form a helical membrane-spanning segment.

The protein belongs to the amino acid/polyamine transporter 2 family. SdaC/TdcC subfamily.

The protein resides in the cell inner membrane. The chain is Inner membrane transport protein YqeG (yqeG) from Escherichia coli O6:H1 (strain CFT073 / ATCC 700928 / UPEC).